The following is a 412-amino-acid chain: Peptidase T (412 aa).

A Zn(2+)-binding site is contributed by His81. Asp83 is a catalytic residue. A Zn(2+)-binding site is contributed by Asp144. The active-site Proton acceptor is the Glu178. Glu179, Asp201, and His383 together coordinate Zn(2+).

The protein belongs to the peptidase M20B family. Zn(2+) is required as a cofactor.

The protein localises to the cytoplasm. The catalysed reaction is Release of the N-terminal residue from a tripeptide.. Functionally, cleaves the N-terminal amino acid of tripeptides. The polypeptide is Peptidase T (Bacillus cereus (strain ATCC 14579 / DSM 31 / CCUG 7414 / JCM 2152 / NBRC 15305 / NCIMB 9373 / NCTC 2599 / NRRL B-3711)).